The chain runs to 88 residues: Apolipoprotein C-I (88 aa).

The signal sequence occupies residues 1-26; that stretch reads MRLFLSLPVLVVVLAMVLEGPAPTQA.

Belongs to the apolipoprotein C1 family.

The protein localises to the secreted. Inhibitor of lipoprotein binding to the low density lipoprotein (LDL) receptor, LDL receptor-related protein, and very low density lipoprotein (VLDL) receptor. Associates with high density lipoproteins (HDL) and the triacylglycerol-rich lipoproteins in the plasma and makes up about 10% of the protein of the VLDL and 2% of that of HDL. Appears to interfere directly with fatty acid uptake and is also the major plasma inhibitor of cholesteryl ester transfer protein (CETP). Binds free fatty acids and reduces their intracellular esterification. Modulates the interaction of APOE with beta-migrating VLDL and inhibits binding of beta-VLDL to the LDL receptor-related protein. The sequence is that of Apolipoprotein C-I (APOC1) from Mirounga angustirostris (Northern elephant seal).